The primary structure comprises 92 residues: Protein AC152 (92 aa).

Acts as a transactivator of AC102 and HE65 genes. Therefore, participates in the global recruitment of G-actin to the host nucleus. The protein is Protein AC152 (AC152) of Autographa californica nuclear polyhedrosis virus (AcMNPV).